Reading from the N-terminus, the 242-residue chain is Biosynthetic peptidoglycan transglycosylase (242 aa).

The chain crosses the membrane as a helical span at residues 19 to 39 (LMVVLAIFWGGGIALFSVAPV).

Belongs to the glycosyltransferase 51 family.

The protein resides in the cell inner membrane. It catalyses the reaction [GlcNAc-(1-&gt;4)-Mur2Ac(oyl-L-Ala-gamma-D-Glu-L-Lys-D-Ala-D-Ala)](n)-di-trans,octa-cis-undecaprenyl diphosphate + beta-D-GlcNAc-(1-&gt;4)-Mur2Ac(oyl-L-Ala-gamma-D-Glu-L-Lys-D-Ala-D-Ala)-di-trans,octa-cis-undecaprenyl diphosphate = [GlcNAc-(1-&gt;4)-Mur2Ac(oyl-L-Ala-gamma-D-Glu-L-Lys-D-Ala-D-Ala)](n+1)-di-trans,octa-cis-undecaprenyl diphosphate + di-trans,octa-cis-undecaprenyl diphosphate + H(+). It participates in cell wall biogenesis; peptidoglycan biosynthesis. Peptidoglycan polymerase that catalyzes glycan chain elongation from lipid-linked precursors. In Escherichia coli O127:H6 (strain E2348/69 / EPEC), this protein is Biosynthetic peptidoglycan transglycosylase.